The following is a 377-amino-acid chain: Succinyl-diaminopimelate desuccinylase (377 aa).

Position 67 (His-67) interacts with Zn(2+). Asp-69 is an active-site residue. Asp-100 serves as a coordination point for Zn(2+). Glu-134 (proton acceptor) is an active-site residue. Residues Glu-135, Glu-163, and His-349 each contribute to the Zn(2+) site.

The protein belongs to the peptidase M20A family. DapE subfamily. In terms of assembly, homodimer. Zn(2+) is required as a cofactor. The cofactor is Co(2+).

It catalyses the reaction N-succinyl-(2S,6S)-2,6-diaminopimelate + H2O = (2S,6S)-2,6-diaminopimelate + succinate. Its pathway is amino-acid biosynthesis; L-lysine biosynthesis via DAP pathway; LL-2,6-diaminopimelate from (S)-tetrahydrodipicolinate (succinylase route): step 3/3. Catalyzes the hydrolysis of N-succinyl-L,L-diaminopimelic acid (SDAP), forming succinate and LL-2,6-diaminopimelate (DAP), an intermediate involved in the bacterial biosynthesis of lysine and meso-diaminopimelic acid, an essential component of bacterial cell walls. The sequence is that of Succinyl-diaminopimelate desuccinylase from Haemophilus influenzae (strain 86-028NP).